A 1518-amino-acid chain; its full sequence is WD repeat-containing protein 62 (1518 aa).

N-acetylalanine is present on A2. S33 carries the phosphoserine modification. A Phosphothreonine modification is found at T46. S49 carries the post-translational modification Phosphoserine. Residue T50 is modified to Phosphothreonine. S52 is subject to Phosphoserine. 12 WD repeats span residues 109-150 (TARK…QVAE), 153-194 (GHKY…VVAS), 196-234 (KVSC…ETKV), 291-330 (INLK…YLAN), 357-396 (AVYP…RVGK), 402-450 (FHSS…DSHW), 490-529 (DVKA…ELVK), 532-574 (AHDA…NLEQ), 578-618 (DHSS…DGLH), 626-665 (AEKT…QKKC), 671-713 (GDEG…KMFG), and 714-752 (HSEI…TNCM). A Phosphoserine modification is found at S501. The segment covering 762-772 (RQQQQHTNDKK) has biased composition (basic and acidic residues). Disordered stretches follow at residues 762–824 (RQQQ…DPDP) and 908–935 (ASLL…KESS). Residues 781 to 790 (TYVSTPSEIH) are compositionally biased toward polar residues. Acidic residues predominate over residues 797–809 (QTEDDLEEECEPE). The WD 13 repeat unit spans residues 803-846 (EEECEPEEMLKTPSKDSLDPDPRCLLTNGKLPLWAKRLLGDDDV). Over residues 810–824 (EMLKTPSKDSLDPDP) the composition is skewed to basic and acidic residues. The segment covering 908-920 (ASLLSESESPQEA) has biased composition (low complexity). The residue at position 944 (S944) is a Phosphoserine. Residues 962-1055 (EVEAGPGDQQ…PSSSLPQTPE (94 aa)) are disordered. Polar residues-rich tracts occupy residues 971–981 (QGDSYLRVSSD) and 1045–1054 (VPSSSLPQTP). T1053 bears the Phosphothreonine mark. Phosphoserine is present on residues S1070, S1093, S1101, S1123, S1144, S1228, S1248, and S1249. The WD 14 repeat unit spans residues 1132–1173 (GGSQPRAGTGYASPDRTHVLAAGKAEETLEAWRPPPPCLTSL). The WD 15 repeat unit spans residues 1255 to 1293 (SLGQELQAITTATTPSLDSEGQEPALRSWGNHEARANLR). Residue T1268 is modified to Phosphothreonine. Residues 1339–1377 (FRPSLPAPESPGLPAHPSNPQLPEARPGIPGGTASLLEP) form a disordered region.

As to quaternary structure, can form homodimers (via C-terminus). Interacts (via C-terminus) with MAPKBP1 (via C-terminus). Interacts with CDK5RAP2, CEP152, CEP63 and KIAA0753. CEP63, CDK5RAP2, CEP152, WDR62 are proposed to form a stepwise assembled complex at the centrosome forming a ring near parental centrioles. In terms of tissue distribution, present in fetal brain, enriched within the ventricular and subventricular zone (at protein level). In the embryonic brain it is expressed in mitotic neural precursor cells.

The protein localises to the nucleus. It localises to the cytoplasm. The protein resides in the cytoskeleton. It is found in the spindle pole. Its subcellular location is the microtubule organizing center. The protein localises to the centrosome. It localises to the centriole. Functionally, required for cerebral cortical development. Plays a role in neuronal proliferation and migration. Plays a role in mother-centriole-dependent centriole duplication; the function also seems to involve CEP152, CDK5RAP2 and CEP63 through a stepwise assembled complex at the centrosome that recruits CDK2 required for centriole duplication. The sequence is that of WD repeat-containing protein 62 (WDR62) from Homo sapiens (Human).